Here is a 188-residue protein sequence, read N- to C-terminus: HTH-type transcriptional repressor AcnR (188 aa).

Positions 10 to 70 (VNSRQEILEG…ALAREDAARM (61 aa)) constitute an HTH tetR-type domain. Residues 33 to 52 (TVRRLEEATGKSRGAIFHHF) constitute a DNA-binding region (H-T-H motif). Residues 79-80 (LV), Arg-130, and Asn-134 each bind citrate. Glu-181 provides a ligand contact to Mg(2+). Arg-185 provides a ligand contact to citrate.

As to quaternary structure, homodimer.

AcnR negatively controls the expression of the aconitase gene acn. This Corynebacterium efficiens (strain DSM 44549 / YS-314 / AJ 12310 / JCM 11189 / NBRC 100395) protein is HTH-type transcriptional repressor AcnR.